The primary structure comprises 385 residues: ADP,ATP carrier protein 2, mitochondrial (385 aa).

A mitochondrion-targeting transit peptide spans 1-74; sequence MVEQTQHPTI…ATTTSPVFVQ (74 aa). 3 Solcar repeats span residues 82–175, 187–280, and 288–374; these read TNFA…FKRL, KWFA…VKPV, and DSFF…LQLI. A run of 5 helical transmembrane segments spans residues 84–111, 152–176, 185–205, 256–277, and 291–311; these read FAID…VKLL, TANV…KRLF, YWKW…SSLL, FNIS…YDSV, and FASF…SYPI. ADP is bound by residues Arg-157 and Lys-169. An ADP-binding site is contributed by Arg-315. Residues 315 to 320 are important for transport activity; the sequence is RRRMMM. Residues 315–320 carry the Nucleotide carrier signature motif motif; that stretch reads RRRMMM. The chain crosses the membrane as a helical span at residues 351–371; sequence AGANILRAVAGAGVLAGYDKL.

This sequence belongs to the mitochondrial carrier (TC 2.A.29) family. In terms of assembly, monomer.

The protein resides in the mitochondrion inner membrane. It catalyses the reaction ADP(in) + ATP(out) = ADP(out) + ATP(in). The matrix-open state (m-state) is inhibited by the membrane-permeable bongkrekic acid (BKA). The cytoplasmic-open state (c-state) is inhibited by the membrane-impermeable toxic inhibitor carboxyatractyloside (CATR). Its function is as follows. ADP:ATP antiporter that mediates import of ADP into the mitochondrial matrix for ATP synthesis, and export of ATP out to fuel the cell. Cycles between the cytoplasmic-open state (c-state) and the matrix-open state (m-state): operates by the alternating access mechanism with a single substrate-binding site intermittently exposed to either the cytosolic (c-state) or matrix (m-state) side of the inner mitochondrial membrane. The sequence is that of ADP,ATP carrier protein 2, mitochondrial (AAC2) from Arabidopsis thaliana (Mouse-ear cress).